A 773-amino-acid polypeptide reads, in one-letter code: DNA gyrase subunit B (773 aa).

Residues 416 to 530 enclose the Toprim domain; the sequence is SEIFLVEGDS…QGHVYIAQAP (115 aa). 3 residues coordinate Mg(2+): Glu-422, Asp-495, and Asp-497.

It belongs to the type II topoisomerase GyrB family. As to quaternary structure, heterotetramer, composed of two GyrA and two GyrB chains. In the heterotetramer, GyrA contains the active site tyrosine that forms a transient covalent intermediate with DNA, while GyrB binds cofactors and catalyzes ATP hydrolysis. The cofactor is Mg(2+). Requires Mn(2+) as cofactor. Ca(2+) serves as cofactor.

Its subcellular location is the cytoplasm. The enzyme catalyses ATP-dependent breakage, passage and rejoining of double-stranded DNA.. Its function is as follows. A type II topoisomerase that negatively supercoils closed circular double-stranded (ds) DNA in an ATP-dependent manner to modulate DNA topology and maintain chromosomes in an underwound state. Negative supercoiling favors strand separation, and DNA replication, transcription, recombination and repair, all of which involve strand separation. Also able to catalyze the interconversion of other topological isomers of dsDNA rings, including catenanes and knotted rings. Type II topoisomerases break and join 2 DNA strands simultaneously in an ATP-dependent manner. The chain is DNA gyrase subunit B from Helicobacter pylori (strain ATCC 700392 / 26695) (Campylobacter pylori).